A 470-amino-acid chain; its full sequence is 6-phosphofructo-2-kinase/fructose-2,6-bisphosphatase (470 aa).

Positions 1 to 249 (MAAVASGQLT…VYYLMNTHVT (249 aa)) are 6-phosphofructo-2-kinase. Position 31 is a phosphoserine; by PKA (S31). 47-55 (GLRRPGKTY) contacts ATP. Beta-D-fructose 6-phosphate contacts are provided by R80 and R104. D130 is a catalytic residue. T132 and R138 together coordinate beta-D-fructose 6-phosphate. Residue C160 is part of the active site. Residue 169-174 (NIKQVK) coordinates ATP. Beta-D-fructose 6-phosphate contacts are provided by K174, R195, and Y199. The tract at residues 250-469 (PRAIYLSRHG…AEALVTVPEH (220 aa)) is fructose-2,6-bisphosphatase. Position 257 (R257) interacts with beta-D-fructose 2,6-bisphosphate. The active-site Tele-phosphohistidine intermediate is H258. The beta-D-fructose 2,6-bisphosphate site is built by N264 and G270. Catalysis depends on E327, which acts as the Proton donor/acceptor. Beta-D-fructose 2,6-bisphosphate contacts are provided by Y338, R352, K356, Y367, Q393, and R397. 349–352 (FALR) is an ATP binding site. ATP-binding positions include 393-397 (QAVMR) and Y429.

This sequence in the C-terminal section; belongs to the phosphoglycerate mutase family. Homodimer. Liver.

It carries out the reaction beta-D-fructose 2,6-bisphosphate + H2O = beta-D-fructose 6-phosphate + phosphate. The catalysed reaction is beta-D-fructose 6-phosphate + ATP = beta-D-fructose 2,6-bisphosphate + ADP + H(+). Its activity is regulated as follows. Phosphorylation results in inhibition of the kinase activity. Synthesis and degradation of fructose 2,6-bisphosphate. This Gallus gallus (Chicken) protein is 6-phosphofructo-2-kinase/fructose-2,6-bisphosphatase.